Consider the following 523-residue polypeptide: MEDTSPQAVAEKAAKDPKAAKDLKDDAAAATKSFPDHFSREGDDQMDFEGVIFSSSPVLDLSQRGLRHLGKFFKIPNLQQLHLQRNLLREIPEDFFQLLPNLTWLDLRYNKIKVLPSGIGSHKHLKTLLLERNPIKMLPVELGQVTTLTALNLRHCPLEFPPRLIVQKGLVAILTFLRICSVEKAFPGDELLPEVSAPKMGSNDLQYPVLPLPRKGSPSENSLNDPDQEKEKADFFPPMERLDLSELRKSNAASEIWPSKEEIRRFWKLRQEIVENEQVEIQEKKLLAVELPPNLKAALNVKEKKHRKPWPAVRKRSTSFKGILPNLPSGYQNTVHANRMEDTHKAALQELQEKETVLEQRRRDKRALQEWREQTQHMRTRRELSKLQPPHSNMMASKIPFATDLTDYEKMPVSPFGKVKPSGEGTAQRPIEISASPLAELEDKIKRHTQQIRTRSFLGTNPMQDIKTANQDLETTKKLQEELRKLKVEMTLNKDHPFPSFTGNLSLHPPASQPQNIFFNTKS.

The disordered stretch occupies residues 1–26; that stretch reads MEDTSPQAVAEKAAKDPKAAKDLKDD. A compositionally biased stretch (basic and acidic residues) spans 12-26; sequence KAAKDPKAAKDLKDD. 5 LRR repeats span residues 55–76, 77–98, 101–122, 124–145, and 147–168; these read SSPV…FKIP, NLQQ…FFQL, NLTW…IGSH, HLKT…LGQV, and TLTA…IVQK. 2 disordered regions span residues 206-236 and 372-394; these read QYPV…ADFF and REQT…HSNM. Composition is skewed to basic and acidic residues over residues 227–236 and 372–385; these read DQEKEKADFF and REQT…RELS. 2 coiled-coil regions span residues 335-374 and 463-494; these read VHAN…WREQ and MQDI…TLNK. The interval 503–523 is disordered; the sequence is GNLSLHPPASQPQNIFFNTKS. The segment covering 513–523 has biased composition (polar residues); it reads QPQNIFFNTKS.

This Mus musculus (Mouse) protein is Leucine-rich repeat-containing protein 27 (Lrrc27).